A 383-amino-acid polypeptide reads, in one-letter code: uncharacterized protein (383 aa).

The protein belongs to the peptidase M20 family.

This is an uncharacterized protein from Staphylococcus aureus (strain bovine RF122 / ET3-1).